A 1427-amino-acid chain; its full sequence is Lysophospholipase NTE1 (1427 aa).

Residues 1–60 are Cytoplasmic-facing; the sequence is MDSLHVSSTSVLVDVVEAVETATSLVVDTAEAVATEQATPTAVISNALARSAYAAHTSLS. A helical membrane pass occupies residues 61-81; sequence YLAWAFGLWFLRLIGWVCYGI. The Lumenal segment spans residues 82 to 96; the sequence is PTYVLGLLGRTINIS. Residues 97–117 traverse the membrane as a helical segment; it reads LQFSSLLLILIALVTVVVAVV. Topologically, residues 118–1427 are cytoplasmic; the sequence is RYKYLTVYSR…KRTIARRNSI (1310 aa). Over residues 281–296 the composition is skewed to polar residues; that stretch reads PMTSASDVPNMSLSSD. Positions 281–315 are disordered; that stretch reads PMTSASDVPNMSLSSDGSDDLQKGEPQFGEPRLSE. A nucleoside 3',5'-cyclic phosphate contacts are provided by residues 615–735 and 731–870; these read LMAA…LTKV and SLTK…VASR. A disordered region spans residues 787–807; sequence GIVGGESGDAKDGKSHRKNLT. The PNPLA domain occupies 1124–1288; that stretch reads LVLGGGGARG…VDNLPVSEMK (165 aa). The GXGXXG signature appears at 1128 to 1133; sequence GGGARG. A GXSXG motif is present at residues 1155-1159; that stretch reads GTSIG. Ser1157 serves as the catalytic Nucleophile. Catalysis depends on Asp1275, which acts as the Proton acceptor. The DGA/G motif lies at 1275–1277; the sequence is DGG.

Belongs to the NTE family.

Its subcellular location is the endoplasmic reticulum membrane. The catalysed reaction is a 1-acyl-sn-glycero-3-phosphocholine + H2O = sn-glycerol 3-phosphocholine + a fatty acid + H(+). Inhibited by organophosphorus esters. In terms of biological role, intracellular phospholipase B that catalyzes the double deacylation of phosphatidylcholine (PC) to glycerophosphocholine (GroPCho). Plays an important role in membrane lipid homeostasis. Responsible for the rapid PC turnover in response to inositol, elevated temperatures, or when choline is present in the growth medium. The protein is Lysophospholipase NTE1 (NTE1) of Yarrowia lipolytica (strain CLIB 122 / E 150) (Yeast).